Here is a 115-residue protein sequence, read N- to C-terminus: MSNNIIKAIESEQLKQDLPEFCPGDTVQVQVRVKEGTRERLQAFEGVVIAKRNRGLNSSFTVRKISHGEGVERVFQTHSPTLESILVKRRGDVRRAKLYYLRERRGKAARIKEKI.

The protein belongs to the bacterial ribosomal protein bL19 family.

In terms of biological role, this protein is located at the 30S-50S ribosomal subunit interface and may play a role in the structure and function of the aminoacyl-tRNA binding site. The sequence is that of Large ribosomal subunit protein bL19 from Nitrosococcus oceani (strain ATCC 19707 / BCRC 17464 / JCM 30415 / NCIMB 11848 / C-107).